Consider the following 278-residue polypeptide: 4-diphosphocytidyl-2-C-methyl-D-erythritol kinase (278 aa).

Residue Lys9 is part of the active site. ATP is bound at residue 89-99 (PVASGIGGGSA). The active site involves Asp128.

It belongs to the GHMP kinase family. IspE subfamily.

It catalyses the reaction 4-CDP-2-C-methyl-D-erythritol + ATP = 4-CDP-2-C-methyl-D-erythritol 2-phosphate + ADP + H(+). The protein operates within isoprenoid biosynthesis; isopentenyl diphosphate biosynthesis via DXP pathway; isopentenyl diphosphate from 1-deoxy-D-xylulose 5-phosphate: step 3/6. In terms of biological role, catalyzes the phosphorylation of the position 2 hydroxy group of 4-diphosphocytidyl-2C-methyl-D-erythritol. The chain is 4-diphosphocytidyl-2-C-methyl-D-erythritol kinase from Cereibacter sphaeroides (strain ATCC 17025 / ATH 2.4.3) (Rhodobacter sphaeroides).